A 137-amino-acid chain; its full sequence is Acidic phospholipase A2 1 (137 aa).

The first 11 residues, L1 to A11, serve as a signal peptide directing secretion. A propeptide spanning residues A12–L19 is cleaved from the precursor. 7 disulfides stabilise this stretch: C30-C89, C44-C136, C46-C62, C61-C117, C68-C110, C78-C103, and C96-C108. Y45, G47, and G49 together coordinate Ca(2+). Residues G49 and H65 each contribute to the tridecanoate site. H65 is a catalytic residue. D66 lines the Ca(2+) pocket. D111 is a catalytic residue.

In terms of assembly, monomer. Requires Ca(2+) as cofactor. As to expression, expressed by the venom gland.

It localises to the secreted. It carries out the reaction a 1,2-diacyl-sn-glycero-3-phosphocholine + H2O = a 1-acyl-sn-glycero-3-phosphocholine + a fatty acid + H(+). Snake venom phospholipase A2 (PLA2) that shows anticoagulant and neurotoxic activities. PLA2 catalyzes the calcium-dependent hydrolysis of the 2-acyl groups in 3-sn-phosphoglycerides. The polypeptide is Acidic phospholipase A2 1 (Bungarus caeruleus (Indian krait)).